The chain runs to 337 residues: DNA-directed RNA polymerase subunit alpha (337 aa).

The alpha N-terminal domain (alpha-NTD) stretch occupies residues 1–231; it reads MRNITISAYT…KQLSVFDKIT (231 aa). Residues 248–337 are alpha C-terminal domain (alpha-CTD); it reads NTKLLQNITD…IAELKAQNEG (90 aa).

The protein belongs to the RNA polymerase alpha chain family. In terms of assembly, homodimer. The RNAP catalytic core consists of 2 alpha, 1 beta, 1 beta' and 1 omega subunit. When a sigma factor is associated with the core the holoenzyme is formed, which can initiate transcription.

The catalysed reaction is RNA(n) + a ribonucleoside 5'-triphosphate = RNA(n+1) + diphosphate. DNA-dependent RNA polymerase catalyzes the transcription of DNA into RNA using the four ribonucleoside triphosphates as substrates. The protein is DNA-directed RNA polymerase subunit alpha of Campylobacter jejuni subsp. doylei (strain ATCC BAA-1458 / RM4099 / 269.97).